A 480-amino-acid polypeptide reads, in one-letter code: Probable cytosol aminopeptidase (480 aa).

Lys248 and Asp253 together coordinate Mn(2+). Residue Lys260 is part of the active site. Mn(2+)-binding residues include Asp271, Asp330, and Glu332. The active site involves Arg334.

It belongs to the peptidase M17 family. The cofactor is Mn(2+).

The protein resides in the cytoplasm. The catalysed reaction is Release of an N-terminal amino acid, Xaa-|-Yaa-, in which Xaa is preferably Leu, but may be other amino acids including Pro although not Arg or Lys, and Yaa may be Pro. Amino acid amides and methyl esters are also readily hydrolyzed, but rates on arylamides are exceedingly low.. It carries out the reaction Release of an N-terminal amino acid, preferentially leucine, but not glutamic or aspartic acids.. In terms of biological role, presumably involved in the processing and regular turnover of intracellular proteins. Catalyzes the removal of unsubstituted N-terminal amino acids from various peptides. This chain is Probable cytosol aminopeptidase, found in Solibacter usitatus (strain Ellin6076).